Reading from the N-terminus, the 147-residue chain is UPF0306 protein YhbP (147 aa).

It belongs to the UPF0306 family.

The polypeptide is UPF0306 protein YhbP (Shigella sonnei (strain Ss046)).